Reading from the N-terminus, the 113-residue chain is Iron-sulfur cluster insertion protein ErpA (113 aa).

Positions 41, 105, and 107 each coordinate iron-sulfur cluster.

The protein belongs to the HesB/IscA family. As to quaternary structure, homodimer. The cofactor is iron-sulfur cluster.

Required for insertion of 4Fe-4S clusters for at least IspG. In Histophilus somni (strain 129Pt) (Haemophilus somnus), this protein is Iron-sulfur cluster insertion protein ErpA.